The primary structure comprises 332 residues: DNA-directed RNA polymerase subunit alpha (332 aa).

The interval 1–226 (MLIAQRPTLT…ELFGLCRELN (226 aa)) is alpha N-terminal domain (alpha-NTD). Positions 245-332 (PEMNIPIEDL…GGTFFSPEDE (88 aa)) are alpha C-terminal domain (alpha-CTD).

Belongs to the RNA polymerase alpha chain family. In terms of assembly, homodimer. The RNAP catalytic core consists of 2 alpha, 1 beta, 1 beta' and 1 omega subunit. When a sigma factor is associated with the core the holoenzyme is formed, which can initiate transcription.

It catalyses the reaction RNA(n) + a ribonucleoside 5'-triphosphate = RNA(n+1) + diphosphate. DNA-dependent RNA polymerase catalyzes the transcription of DNA into RNA using the four ribonucleoside triphosphates as substrates. This chain is DNA-directed RNA polymerase subunit alpha, found in Bifidobacterium adolescentis (strain ATCC 15703 / DSM 20083 / NCTC 11814 / E194a).